A 187-amino-acid chain; its full sequence is Putative zinc finger protein 833 (187 aa).

6 C2H2-type zinc fingers span residues tyrosine 10–histidine 32, tyrosine 38–histidine 60, tyrosine 66–histidine 88, cysteine 94–histidine 116, tyrosine 122–histidine 144, and tyrosine 150–histidine 172.

The chain is Putative zinc finger protein 833 (ZNF833P) from Homo sapiens (Human).